The sequence spans 134 residues: Small ribosomal subunit protein uS12 (134 aa).

The interval 1–26 (MPTIQQLVRKGRESFADKSKSPALNS) is disordered. Residues 10–20 (KGRESFADKSK) are compositionally biased toward basic and acidic residues. Asp89 carries the 3-methylthioaspartic acid modification. The disordered stretch occupies residues 103-134 (DTAGVNGRTQRRSKYGAKRPKPGQAPAAKGKK). Over residues 111-123 (TQRRSKYGAKRPK) the composition is skewed to basic residues. Residues 124–134 (PGQAPAAKGKK) show a composition bias toward low complexity.

The protein belongs to the universal ribosomal protein uS12 family. Part of the 30S ribosomal subunit. Contacts proteins S8 and S17. May interact with IF1 in the 30S initiation complex.

In terms of biological role, with S4 and S5 plays an important role in translational accuracy. Interacts with and stabilizes bases of the 16S rRNA that are involved in tRNA selection in the A site and with the mRNA backbone. Located at the interface of the 30S and 50S subunits, it traverses the body of the 30S subunit contacting proteins on the other side and probably holding the rRNA structure together. The combined cluster of proteins S8, S12 and S17 appears to hold together the shoulder and platform of the 30S subunit. The sequence is that of Small ribosomal subunit protein uS12 from Porphyromonas gingivalis (strain ATCC BAA-308 / W83).